The sequence spans 343 residues: Ribosomal RNA small subunit methyltransferase C (343 aa).

This sequence belongs to the methyltransferase superfamily. RsmC family. Monomer.

Its subcellular location is the cytoplasm. It carries out the reaction guanosine(1207) in 16S rRNA + S-adenosyl-L-methionine = N(2)-methylguanosine(1207) in 16S rRNA + S-adenosyl-L-homocysteine + H(+). Functionally, specifically methylates the guanine in position 1207 of 16S rRNA in the 30S particle. In Escherichia coli O157:H7, this protein is Ribosomal RNA small subunit methyltransferase C.